Reading from the N-terminus, the 137-residue chain is Large ribosomal subunit protein uL16 (137 aa).

It belongs to the universal ribosomal protein uL16 family. Part of the 50S ribosomal subunit.

Binds 23S rRNA and is also seen to make contacts with the A and possibly P site tRNAs. The protein is Large ribosomal subunit protein uL16 of Baumannia cicadellinicola subsp. Homalodisca coagulata.